The following is a 453-amino-acid chain: Bifunctional protein GlmU (453 aa).

The pyrophosphorylase stretch occupies residues 1 to 226 (MTLDVVILAA…ALEVEGVNNR (226 aa)). Residues 8–11 (LAAG), K22, Q73, 78–79 (GT), 99–101 (YGD), G136, E151, N166, and N224 contribute to the UDP-N-acetyl-alpha-D-glucosamine site. D101 contributes to the Mg(2+) binding site. Mg(2+) is bound at residue N224. Residues 227 to 247 (SQMAALERAYQRDRAERLLTE) form a linker region. Residues 248-453 (GVALADPARF…AGWKRPRKSS (206 aa)) are N-acetyltransferase. Residues R330 and K348 each contribute to the UDP-N-acetyl-alpha-D-glucosamine site. H360 functions as the Proton acceptor in the catalytic mechanism. 2 residues coordinate UDP-N-acetyl-alpha-D-glucosamine: Y363 and N374. Acetyl-CoA-binding positions include A377, 383–384 (NY), S402, A420, and R437.

This sequence in the N-terminal section; belongs to the N-acetylglucosamine-1-phosphate uridyltransferase family. In the C-terminal section; belongs to the transferase hexapeptide repeat family. As to quaternary structure, homotrimer. Mg(2+) serves as cofactor.

Its subcellular location is the cytoplasm. It carries out the reaction alpha-D-glucosamine 1-phosphate + acetyl-CoA = N-acetyl-alpha-D-glucosamine 1-phosphate + CoA + H(+). The enzyme catalyses N-acetyl-alpha-D-glucosamine 1-phosphate + UTP + H(+) = UDP-N-acetyl-alpha-D-glucosamine + diphosphate. It participates in nucleotide-sugar biosynthesis; UDP-N-acetyl-alpha-D-glucosamine biosynthesis; N-acetyl-alpha-D-glucosamine 1-phosphate from alpha-D-glucosamine 6-phosphate (route II): step 2/2. It functions in the pathway nucleotide-sugar biosynthesis; UDP-N-acetyl-alpha-D-glucosamine biosynthesis; UDP-N-acetyl-alpha-D-glucosamine from N-acetyl-alpha-D-glucosamine 1-phosphate: step 1/1. The protein operates within bacterial outer membrane biogenesis; LPS lipid A biosynthesis. Its function is as follows. Catalyzes the last two sequential reactions in the de novo biosynthetic pathway for UDP-N-acetylglucosamine (UDP-GlcNAc). The C-terminal domain catalyzes the transfer of acetyl group from acetyl coenzyme A to glucosamine-1-phosphate (GlcN-1-P) to produce N-acetylglucosamine-1-phosphate (GlcNAc-1-P), which is converted into UDP-GlcNAc by the transfer of uridine 5-monophosphate (from uridine 5-triphosphate), a reaction catalyzed by the N-terminal domain. This is Bifunctional protein GlmU from Chromohalobacter salexigens (strain ATCC BAA-138 / DSM 3043 / CIP 106854 / NCIMB 13768 / 1H11).